A 182-amino-acid chain; its full sequence is Adenylate kinase (182 aa).

Residue 12–17 participates in ATP binding; the sequence is GAGKGT. The NMP stretch occupies residues 32–61; it reads STGDLLRTEVGAKTPLGQEAAAVMNRGELV. AMP contacts are provided by residues threonine 33, arginine 38, 59–61, 85–88, and glutamine 92; these read ELV and GFPR. An LID region spans residues 126 to 132; sequence SRGRSDD. Arginine 127 is an ATP binding site. 2 residues coordinate AMP: arginine 129 and arginine 140. Glycine 168 is a binding site for ATP.

The protein belongs to the adenylate kinase family. As to quaternary structure, monomer.

It localises to the cytoplasm. The catalysed reaction is AMP + ATP = 2 ADP. It participates in purine metabolism; AMP biosynthesis via salvage pathway; AMP from ADP: step 1/1. In terms of biological role, catalyzes the reversible transfer of the terminal phosphate group between ATP and AMP. Plays an important role in cellular energy homeostasis and in adenine nucleotide metabolism. This is Adenylate kinase from Prochlorococcus marinus (strain MIT 9313).